The primary structure comprises 455 residues: SUN domain-containing protein 2 (455 aa).

Residues 1–12 (MSASTVSITASP) show a composition bias toward polar residues. Positions 1 to 99 (MSASTVSITA…RTRKSQGNKI (99 aa)) are disordered. Ser-2 is modified (N-acetylserine). Topologically, residues 2 to 105 (SASTVSITAS…GNKIDRGKWK (104 aa)) are nuclear. Ser-63 is modified (phosphoserine). A compositionally biased stretch (low complexity) spans 74 to 88 (KSGSTATGTNTTTTQ). The Nuclear localization signal signature appears at 88 to 95 (QRRTRKSQ). A helical transmembrane segment spans residues 106–128 (TVVRVFAKQFGALLLLVGLIQLI). Residues 129-455 (RKLTLKDSSL…ELDSVSVAHA (327 aa)) lie on the Perinuclear space side of the membrane. Positions 201–225 (LHSELKKVESKTERLQVSVDELNAK) form a coiled coil. In terms of domain architecture, SUN spans 285–447 (GGAFVMGHSD…YRFRVHGREL (163 aa)).

In terms of assembly, forms homomers (e.g. dimers, trimers and tetramers) and heteromers with SUN1. Interacts with SUN3, SUN4 and TIK. Core component of the LINC complex which is composed of inner nuclear membrane SUN domain-containing proteins coupled to outer nuclear membrane WIP and WIT proteins. The LINC complex also involves nucleoskeletal proteins CRWN/LINC and possibly KAKU4 and the cytoskeletal myosin KAKU1. Interacts with LINC1, WIP1, WIP2 and WIP3 at the nuclear envelope (NE). Interacts with SINE1, SINE2, SINE3 and SINE4. Interacts with NEAP1, NEA2 and NEAP3. As to expression, expressed in roots, hypocotyls, cotyledons and leaves and inflorescences.

It is found in the nucleus inner membrane. Its subcellular location is the cytoplasm. It localises to the cytoskeleton. The protein resides in the phragmoplast. The protein localises to the endoplasmic reticulum membrane. It is found in the nucleus envelope. In terms of biological role, component of SUN-protein-containing multivariate complexes also called LINC complexes which link the nucleoskeleton and cytoskeleton by providing versatile outer nuclear membrane attachment sites for cytoskeletal filaments. Required for the maintenance and/or formation of polarized nuclear shape in root hairs. Modulates the anchoring and mobility of WIP proteins in the nuclear envelope (NE). In association with SUN1, may be involved in telomere attachment to nuclear envelope in the prophase of meiosis. As component of the SUN-WIP-WIT2-KAKU1 complex, mediates the transfer of cytoplasmic forces to the nuclear envelope (NE), leading to nuclear shape changes. This chain is SUN domain-containing protein 2, found in Arabidopsis thaliana (Mouse-ear cress).